The chain runs to 377 residues: Lactosylceramide 1,3-N-acetyl-beta-D-glucosaminyltransferase (377 aa).

Residues 1–14 (MRVFVSSRRVKRWQ) are Cytoplasmic-facing. Residues 15–35 (FFHLFAICFILSFMVFWGPIN) traverse the membrane as a helical; Signal-anchor for type II membrane protein segment. The Lumenal segment spans residues 36–377 (NYIMSHMKSY…NSYPCRAAFA (342 aa)). Asparagine 58 is a glycosylation site (N-linked (GlcNAc...) asparagine).

Belongs to the glycosyltransferase 31 family.

Its subcellular location is the golgi apparatus membrane. The catalysed reaction is a beta-D-Gal-(1-&gt;4)-beta-D-Glc-(1&lt;-&gt;1)-Cer(d18:1(4E)) + UDP-N-acetyl-alpha-D-glucosamine = a beta-D-GlcNAc-(1-&gt;3)-beta-D-Gal-(1-&gt;4)-beta-D-Glc-(1&lt;-&gt;1)-Cer(d18:1(4E)) + UDP + H(+). It catalyses the reaction a neolactoside nLc4Cer(d18:1(4E)) + UDP-N-acetyl-alpha-D-glucosamine = a neolactoside IV(3)-beta-GlcNAc-nLc4Cer(d18:1(4E)) + UDP + H(+). The protein operates within protein modification; protein glycosylation. In terms of biological role, beta-1,3-N-acetylglucosaminyltransferase that plays a key role in the synthesis of lacto- or neolacto-series carbohydrate chains on glycolipids, notably by participating in biosynthesis of HNK-1 and Lewis X carbohydrate structures. Has strong activity toward lactosylceramide (LacCer) and neolactotetraosylceramide (nLc(4)Cer; paragloboside), resulting in the synthesis of Lc(3)Cer and neolactopentaosylceramide (nLc(5)Cer), respectively. Probably plays a central role in regulating neolacto-series glycolipid synthesis during embryonic development. This Rattus norvegicus (Rat) protein is Lactosylceramide 1,3-N-acetyl-beta-D-glucosaminyltransferase.